The primary structure comprises 136 residues: Cell wall synthesis protein CwsA (136 aa).

A helical transmembrane segment spans residues 94–114 (LLIAAVAVTVLGGGAAAFSIV).

The protein belongs to the CwsA family. As to quaternary structure, interacts with CrgA and Wag31.

The protein resides in the cell membrane. Functionally, required for regulated cell division, cell wall synthesis and the maintenance of cell shape. This chain is Cell wall synthesis protein CwsA, found in Mycolicibacterium smegmatis (strain ATCC 700084 / mc(2)155) (Mycobacterium smegmatis).